The sequence spans 458 residues: Argininosuccinate lyase (458 aa).

It belongs to the lyase 1 family. Argininosuccinate lyase subfamily.

Its subcellular location is the cytoplasm. The catalysed reaction is 2-(N(omega)-L-arginino)succinate = fumarate + L-arginine. It functions in the pathway amino-acid biosynthesis; L-arginine biosynthesis; L-arginine from L-ornithine and carbamoyl phosphate: step 3/3. The chain is Argininosuccinate lyase from Haemophilus ducreyi (strain 35000HP / ATCC 700724).